Here is a 103-residue protein sequence, read N- to C-terminus: uncharacterized protein (103 aa).

3 helical membrane-spanning segments follow: residues 1–21 (MPGV…VFLS), 29–49 (IAFI…TGYF), and 69–89 (VVEW…GLLF).

It is found in the cell membrane. This is an uncharacterized protein from Methanocaldococcus jannaschii (strain ATCC 43067 / DSM 2661 / JAL-1 / JCM 10045 / NBRC 100440) (Methanococcus jannaschii).